The following is a 37-amino-acid chain: KSTSCMEAGSYCGSTTRICCGYCAYSASKNVCDYPSN.

Positions 1–4 (KSTS) are excised as a propeptide. 3 disulfides stabilise this stretch: Cys-5–Cys-20, Cys-12–Cys-23, and Cys-19–Cys-32.

It belongs to the conotoxin O1 superfamily. Expressed by the venom duct.

It is found in the secreted. In terms of biological role, omega-conotoxins act at presynaptic membranes, they bind and block voltage-gated calcium channels (Cav). This toxin blocks N-, P- and Q-type calcium channels. This Conus striatus (Striated cone) protein is Omega-conotoxin-like S6.7.